The chain runs to 348 residues: Casein kinase II subunit alpha (348 aa).

One can recognise a Protein kinase domain in the interval 55 to 340; sequence YEIVRKIGRG…PLEAMEHPFF (286 aa). Residues 61-69 and Lys-84 contribute to the ATP site; that span reads IGRGKFSEV. Asp-172 functions as the Proton acceptor in the catalytic mechanism.

This sequence belongs to the protein kinase superfamily. Ser/Thr protein kinase family. CK2 subfamily. In terms of assembly, tetramer of two alpha and two beta chains.

The protein localises to the cytoplasm. The catalysed reaction is L-seryl-[protein] + ATP = O-phospho-L-seryl-[protein] + ADP + H(+). It carries out the reaction L-threonyl-[protein] + ATP = O-phospho-L-threonyl-[protein] + ADP + H(+). Its function is as follows. Casein kinases are operationally defined by their preferential utilization of acidic proteins such as caseins as substrates. The alpha chain contains the catalytic site. The polypeptide is Casein kinase II subunit alpha (Theileria annulata).